The sequence spans 141 residues: Large ribosomal subunit protein uL11 (141 aa).

This sequence belongs to the universal ribosomal protein uL11 family. Part of the ribosomal stalk of the 50S ribosomal subunit. Interacts with L10 and the large rRNA to form the base of the stalk. L10 forms an elongated spine to which L12 dimers bind in a sequential fashion forming a multimeric L10(L12)X complex. Post-translationally, one or more lysine residues are methylated.

Forms part of the ribosomal stalk which helps the ribosome interact with GTP-bound translation factors. This chain is Large ribosomal subunit protein uL11, found in Nitratiruptor sp. (strain SB155-2).